Here is a 719-residue protein sequence, read N- to C-terminus: Polyribonucleotide nucleotidyltransferase (719 aa).

Mg(2+) contacts are provided by Asp507 and Asp513. The KH domain maps to Pro573–Ile633. The 62-residue stretch at Gly658–Glu719 folds into the S1 motif domain.

This sequence belongs to the polyribonucleotide nucleotidyltransferase family. It depends on Mg(2+) as a cofactor.

The protein localises to the cytoplasm. The catalysed reaction is RNA(n+1) + phosphate = RNA(n) + a ribonucleoside 5'-diphosphate. Its function is as follows. Involved in mRNA degradation. Catalyzes the phosphorolysis of single-stranded polyribonucleotides processively in the 3'- to 5'-direction. This chain is Polyribonucleotide nucleotidyltransferase, found in Campylobacter jejuni subsp. jejuni serotype O:2 (strain ATCC 700819 / NCTC 11168).